We begin with the raw amino-acid sequence, 109 residues long: Large ribosomal subunit protein uL22 (109 aa).

The protein belongs to the universal ribosomal protein uL22 family. Part of the 50S ribosomal subunit.

This protein binds specifically to 23S rRNA; its binding is stimulated by other ribosomal proteins, e.g. L4, L17, and L20. It is important during the early stages of 50S assembly. It makes multiple contacts with different domains of the 23S rRNA in the assembled 50S subunit and ribosome. Its function is as follows. The globular domain of the protein is located near the polypeptide exit tunnel on the outside of the subunit, while an extended beta-hairpin is found that lines the wall of the exit tunnel in the center of the 70S ribosome. This chain is Large ribosomal subunit protein uL22, found in Ralstonia nicotianae (strain ATCC BAA-1114 / GMI1000) (Ralstonia solanacearum).